A 314-amino-acid chain; its full sequence is Versiconal hemiacetal acetate esterase (314 aa).

Positions 85 to 87 match the Involved in the stabilization of the negatively charged intermediate by the formation of the oxyanion hole motif; it reads HGG. Active-site residues include serine 154, aspartate 255, and histidine 285.

The protein belongs to the 'GDXG' lipolytic enzyme family.

It carries out the reaction (2S,3S)-versiconal hemiacetal acetate + H2O = (2S-3S)-versiconal hemiacetal + acetate + H(+). It catalyses the reaction (3S)-versiconol acetate + H2O = (S)-versiconol + acetate + H(+). It participates in mycotoxin biosynthesis; aflatoxin biosynthesis. In terms of biological role, versiconal hemiacetal acetate esterase; part of the gene cluster that mediates the biosynthesis of aflatoxins, a group of polyketide-derived furanocoumarins, and part of the most toxic and carcinogenic compounds among the known mycotoxins. The four major aflatoxins produced by A.parasiticus are aflatoxin B1 (AFB1), aflatoxin B2 (AFB2), aflatoxin G1 (AFG1) and aflatoxin G2 (AFG2). Within the aflatoxin pathway, the versiconal hemiacetal acetate esterase aflJ converts versiconal hemiacetal acetate (VHA) into versiconal (VAL). The biosynthesis of aflatoxins begins with the norsolorinic acid synthase aflC that combines a hexanoyl starter unit produced by the fatty acid synthase aflA/aflB and 7 malonyl-CoA extender units to synthesize the precursor NOR. The second step is the conversion of NOR to averantin and requires the norsolorinic acid ketoreductase aflD, which catalyzes the dehydration of norsolorinic acid to form (1'S)-averantin. The norsolorinic acid reductases aflE and aflF may also play a role in the conversion of NOR to AVN. The cytochrome P450 monooxygenase aflG then catalyzes the hydroxylation of AVN to 5'hydroxyaverantin (HAVN). The next step is performed by the 5'-hydroxyaverantin dehydrogenase aflH that transforms HAVN to 5'-oxoaverantin (OAVN) which is further converted to averufin (AVF) by aflK that plays a dual role in the pathway, as a 5'-oxoaverantin cyclase that mediates conversion of 5'-oxoaverantin, as well as a versicolorin B synthase in a later step in the pathway. The averufin oxidase aflI catalyzes the conversion of AVF to versiconal hemiacetal acetate (VHA). VHA is then the substrate for the versiconal hemiacetal acetate esterase aflJ to yield versiconal (VAL). Versicolorin B synthase aflK then converts VAL to versicolorin B (VERB) by closing the bisfuran ring of aflatoxin which is required for DNA-binding, thus giving to aflatoxin its activity as a mutagen. Then, the activity of the versicolorin B desaturase aflL leads to versicolorin A (VERA). A branch point starts from VERB since it can also be converted to dihydrodemethylsterigmatocystin (DMDHST), probably also by aflL, VERA being a precursor for aflatoxins B1 and G1, and DMDHST for aflatoxins B2 and G2. Next, the versicolorin reductase aflM and the cytochrome P450 monooxygenase aflN are involved in conversion of VERA to demethylsterigmatocystin (DMST). AflX and aflY seem also involved in this step, through probable aflX-mediated epoxide ring-opening step following versicolorin A oxidation and aflY-mediated Baeyer-Villiger oxidation required for the formation of the xanthone ring. The methyltransferase aflO then leads to the modification of DMST to sterigmatocystin (ST), and of DMDHST to dihydrosterigmatocystin (DHST). Both ST and DHST are then substrates of the O-methyltransferase aflP to yield O-methylsterigmatocystin (OMST) and dihydro-O-methylsterigmatocystin (DHOMST), respectively. Finally OMST is converted to aflatoxins B1 and G1, and DHOMST to aflatoxins B2 and G2, via the action of several enzymes including O-methylsterigmatocystin oxidoreductase aflQ, the cytochrome P450 monooxygenase aflU, but also the NADH-dependent flavin oxidoreductase nadA which is specifically required for the synthesis of AFG1. The protein is Versiconal hemiacetal acetate esterase of Aspergillus parasiticus (strain ATCC 56775 / NRRL 5862 / SRRC 143 / SU-1).